Consider the following 274-residue polypeptide: Cytochrome c oxidase subunit 3 (274 aa).

Residues 1–15 (MTHQTHAYHMVNPSP) are Mitochondrial matrix-facing. Residues 16–34 (WPLTGALSALLMTSGLAMW) form a helical membrane-spanning segment. Topologically, residues 35–40 (FHFNSS) are mitochondrial intermembrane. A helical membrane pass occupies residues 41–66 (MLLSLGMLTNLLTMYQWWRDIVREGT). At 67 to 72 (FQGHHT) the chain is on the mitochondrial matrix side. The helical transmembrane segment at 73-105 (SIVQKGLRYGMVLFIISEIFFFAGFFWAFYHSS) threads the bilayer. Over 106-128 (LAPTPELGGCWPPTGIHPLNPLE) the chain is Mitochondrial intermembrane. Residues 129–152 (VPLLNTAVLLASGVSITWAHHSLM) traverse the membrane as a helical segment. Topologically, residues 153–155 (EGN) are mitochondrial matrix. A helical membrane pass occupies residues 156 to 183 (RVQMLQALLITITLGLYFTLLQASEYFE). Over 184–190 (TSFTISD) the chain is Mitochondrial intermembrane. The chain crosses the membrane as a helical span at residues 191 to 223 (GVYGSTFFMATGFHGLHVIIGSTFLTVCFFRQL). At 224–232 (SFHFTSNHH) the chain is on the mitochondrial matrix side. A helical transmembrane segment spans residues 233 to 256 (FGFEAAAWYWHFVDVVWLFLYVSI). The Mitochondrial intermembrane segment spans residues 257–274 (YWWGSYSFSIDPMQLTSN).

The protein belongs to the cytochrome c oxidase subunit 3 family. Component of the cytochrome c oxidase (complex IV, CIV), a multisubunit enzyme composed of 14 subunits. The complex is composed of a catalytic core of 3 subunits MT-CO1, MT-CO2 and MT-CO3, encoded in the mitochondrial DNA, and 11 supernumerary subunits COX4I, COX5A, COX5B, COX6A, COX6B, COX6C, COX7A, COX7B, COX7C, COX8 and NDUFA4, which are encoded in the nuclear genome. The complex exists as a monomer or a dimer and forms supercomplexes (SCs) in the inner mitochondrial membrane with NADH-ubiquinone oxidoreductase (complex I, CI) and ubiquinol-cytochrome c oxidoreductase (cytochrome b-c1 complex, complex III, CIII), resulting in different assemblies (supercomplex SCI(1)III(2)IV(1) and megacomplex MCI(2)III(2)IV(2)).

Its subcellular location is the mitochondrion inner membrane. The catalysed reaction is 4 Fe(II)-[cytochrome c] + O2 + 8 H(+)(in) = 4 Fe(III)-[cytochrome c] + 2 H2O + 4 H(+)(out). In terms of biological role, component of the cytochrome c oxidase, the last enzyme in the mitochondrial electron transport chain which drives oxidative phosphorylation. The respiratory chain contains 3 multisubunit complexes succinate dehydrogenase (complex II, CII), ubiquinol-cytochrome c oxidoreductase (cytochrome b-c1 complex, complex III, CIII) and cytochrome c oxidase (complex IV, CIV), that cooperate to transfer electrons derived from NADH and succinate to molecular oxygen, creating an electrochemical gradient over the inner membrane that drives transmembrane transport and the ATP synthase. Cytochrome c oxidase is the component of the respiratory chain that catalyzes the reduction of oxygen to water. Electrons originating from reduced cytochrome c in the intermembrane space (IMS) are transferred via the dinuclear copper A center (CU(A)) of subunit 2 and heme A of subunit 1 to the active site in subunit 1, a binuclear center (BNC) formed by heme A3 and copper B (CU(B)). The BNC reduces molecular oxygen to 2 water molecules using 4 electrons from cytochrome c in the IMS and 4 protons from the mitochondrial matrix. This Lemur catta (Ring-tailed lemur) protein is Cytochrome c oxidase subunit 3 (MT-CO3).